The chain runs to 159 residues: Large ribosomal subunit protein uL15 (159 aa).

Basic and acidic residues predominate over residues Met-1 to Thr-13. A disordered region spans residues Met-1–Arg-41. The span at Arg-21–Val-35 shows a compositional bias: gly residues.

The protein belongs to the universal ribosomal protein uL15 family. In terms of assembly, part of the 50S ribosomal subunit.

Functionally, binds to the 23S rRNA. The sequence is that of Large ribosomal subunit protein uL15 from Maricaulis maris (strain MCS10) (Caulobacter maris).